Reading from the N-terminus, the 249-residue chain is Proteasome activator complex subunit 1 (249 aa).

A disordered region spans residues 60–102 (PLDIPVPDPVKEKEKEERKKQQEKEDKDEKKKGEDEDKGPPCG). Basic and acidic residues predominate over residues 68-98 (PVKEKEKEERKKQQEKEDKDEKKKGEDEDKG).

This sequence belongs to the PA28 family. Heterodimer of PSME1 and PSME2, which forms a hexameric ring. PSME1 can form homoheptamers.

Functionally, implicated in immunoproteasome assembly and required for efficient antigen processing. The PA28 activator complex enhances the generation of class I binding peptides by altering the cleavage pattern of the proteasome. This Sus scrofa (Pig) protein is Proteasome activator complex subunit 1 (PSME1).